Consider the following 392-residue polypeptide: Phosphoglycerate kinase (392 aa).

Residues 21-23 (DFN), arginine 36, 59-62 (HLGR), arginine 118, and arginine 151 contribute to the substrate site. ATP contacts are provided by residues lysine 201, glycine 292, glutamate 323, and 349–352 (GGDS).

Belongs to the phosphoglycerate kinase family. As to quaternary structure, monomer.

The protein resides in the cytoplasm. It carries out the reaction (2R)-3-phosphoglycerate + ATP = (2R)-3-phospho-glyceroyl phosphate + ADP. It functions in the pathway carbohydrate degradation; glycolysis; pyruvate from D-glyceraldehyde 3-phosphate: step 2/5. The sequence is that of Phosphoglycerate kinase from Borrelia duttonii (strain Ly).